The sequence spans 550 residues: Medium/long-chain-fatty-acid--CoA/3-oxocholest-4-en-26-oate--CoA ligase (550 aa).

Residues 178 to 186 (TGGTTGFPK), Asp419, Arg434, and Lys525 contribute to the ATP site. Residues 525–550 (KPDYRWAKEQTEARPADDVHAAHVSA) are disordered.

This sequence belongs to the ATP-dependent AMP-binding enzyme family.

The enzyme catalyses a medium-chain fatty acid + ATP + CoA = a medium-chain fatty acyl-CoA + AMP + diphosphate. It catalyses the reaction a long-chain fatty acid + ATP + CoA = a long-chain fatty acyl-CoA + AMP + diphosphate. The catalysed reaction is (25S)-3-oxocholest-4-en-26-oate + ATP + CoA = (25S)-3-oxocholest-4-en-26-oyl-CoA + AMP + diphosphate. Its pathway is lipid metabolism; fatty acid biosynthesis. It functions in the pathway steroid metabolism; cholesterol metabolism. Catalyzes the activation of medium/long-chain fatty acids as acyl-coenzyme A (acyl-CoA), which are then transferred to the multifunctional polyketide synthase (PKS) type III for further chain extension. Also involved in the degradation of cholesterol via the degradation of the side chains of C-24 branched-chain sterols. Catalyzes the ATP-dependent CoA thioesterification of the sterol 3-oxocholest-4-en-26-oate to yield 3-oxocholest-4-en-26-oyl-CoA. This chain is Medium/long-chain-fatty-acid--CoA/3-oxocholest-4-en-26-oate--CoA ligase, found in Mycobacterium marinum (strain ATCC BAA-535 / M).